Consider the following 885-residue polypeptide: Alanine--tRNA ligase (885 aa).

Basic and acidic residues predominate over residues 426 to 444 (QEQKTRARQDRREKQRGGA). The segment at 426–445 (QEQKTRARQDRREKQRGGAE) is disordered. Residues His-568, His-572, Cys-671, and His-675 each contribute to the Zn(2+) site.

It belongs to the class-II aminoacyl-tRNA synthetase family. Requires Zn(2+) as cofactor.

Its subcellular location is the cytoplasm. It catalyses the reaction tRNA(Ala) + L-alanine + ATP = L-alanyl-tRNA(Ala) + AMP + diphosphate. Functionally, catalyzes the attachment of alanine to tRNA(Ala) in a two-step reaction: alanine is first activated by ATP to form Ala-AMP and then transferred to the acceptor end of tRNA(Ala). Also edits incorrectly charged Ser-tRNA(Ala) and Gly-tRNA(Ala) via its editing domain. This Chlorobium phaeovibrioides (strain DSM 265 / 1930) (Prosthecochloris vibrioformis (strain DSM 265)) protein is Alanine--tRNA ligase.